The primary structure comprises 280 residues: Energy-coupling factor transporter ATP-binding protein EcfA1 (280 aa).

In terms of domain architecture, ABC transporter spans 6–241 (LRTENISFQY…SHMLQEIGLD (236 aa)). 40-47 (GQNGSGKS) lines the ATP pocket.

It belongs to the ABC transporter superfamily. Energy-coupling factor EcfA family. As to quaternary structure, forms a stable energy-coupling factor (ECF) transporter complex composed of 2 membrane-embedded substrate-binding proteins (S component), 2 ATP-binding proteins (A component) and 2 transmembrane proteins (T component).

It localises to the cell membrane. Its function is as follows. ATP-binding (A) component of a common energy-coupling factor (ECF) ABC-transporter complex. Unlike classic ABC transporters this ECF transporter provides the energy necessary to transport a number of different substrates. This Bacillus cereus (strain ZK / E33L) protein is Energy-coupling factor transporter ATP-binding protein EcfA1.